Here is a 221-residue protein sequence, read N- to C-terminus: Type 3 secretion system stator protein (221 aa).

The protein belongs to the SctL stator family. As to quaternary structure, the core secretion machinery of the T3SS is composed of approximately 20 different proteins, including cytoplasmic components, a base, an export apparatus and a needle. This subunit is part of the cytosolic complex. Interacts directly with YscN/SctN (T3SS ATPase) and YscQ/SctQ (the major sorting platform component).

It is found in the cytoplasm. Its function is as follows. Component of the type III secretion system (T3SS), also called injectisome, which is used to inject bacterial effector proteins into eukaryotic host cells. Acts as a regulator of the YscN/SctN ATPase activity. In Yersinia pestis, this protein is Type 3 secretion system stator protein.